The chain runs to 839 residues: Probable beta-glucosidase I (839 aa).

N-linked (GlcNAc...) asparagine glycosylation occurs at N197. D225 is an active-site residue. Residues 396–556 form the PA14 domain; the sequence is DGKTGFKFRV…TQEELISKAV (161 aa). Residue N494 is glycosylated (N-linked (GlcNAc...) asparagine).

This sequence belongs to the glycosyl hydrolase 3 family.

It is found in the secreted. The catalysed reaction is Hydrolysis of terminal, non-reducing beta-D-glucosyl residues with release of beta-D-glucose.. Its pathway is glycan metabolism; cellulose degradation. In terms of biological role, beta-glucosidases are one of a number of cellulolytic enzymes, and catalyze the last step releasing glucose from the inhibitory cellobiose. This is Probable beta-glucosidase I (bglI) from Emericella nidulans (strain FGSC A4 / ATCC 38163 / CBS 112.46 / NRRL 194 / M139) (Aspergillus nidulans).